The chain runs to 389 residues: Methane monooxygenase component A beta chain (389 aa).

M.capsulatus has two forms of methane monooxygenase, a soluble and a membrane-bound type. The soluble type consists of four components (A to D): protein A, comprising three chains, in an alpha-2, beta-2, gamma-2 configuration, is a nonheme iron protein containing an unusual mu-hydroxo bridge structure at its active site and interacts with both oxygen and methane.

It carries out the reaction methane + NADH + O2 + H(+) = methanol + NAD(+) + H2O. The enzyme catalyses methane + NADPH + O2 + H(+) = methanol + NADP(+) + H2O. Responsible for the initial oxygenation of methane to methanol in methanotrophs. It also catalyzes the monohydroxylation of a variety of unactivated alkenes, alicyclic, aromatic and heterocyclic compounds. The chain is Methane monooxygenase component A beta chain (mmoY) from Methylococcus capsulatus (strain ATCC 33009 / NCIMB 11132 / Bath).